We begin with the raw amino-acid sequence, 364 residues long: tRNA 2-selenouridine synthase (364 aa).

One can recognise a Rhodanese domain in the interval 14–137 (LIADTPIIDV…LRQTAIQATI (124 aa)). The S-selanylcysteine intermediate role is filled by C97.

The protein belongs to the SelU family. In terms of assembly, monomer.

The enzyme catalyses 5-methylaminomethyl-2-thiouridine(34) in tRNA + selenophosphate + (2E)-geranyl diphosphate + H2O + H(+) = 5-methylaminomethyl-2-selenouridine(34) in tRNA + (2E)-thiogeraniol + phosphate + diphosphate. It carries out the reaction 5-methylaminomethyl-2-thiouridine(34) in tRNA + (2E)-geranyl diphosphate = 5-methylaminomethyl-S-(2E)-geranyl-thiouridine(34) in tRNA + diphosphate. It catalyses the reaction 5-methylaminomethyl-S-(2E)-geranyl-thiouridine(34) in tRNA + selenophosphate + H(+) = 5-methylaminomethyl-2-(Se-phospho)selenouridine(34) in tRNA + (2E)-thiogeraniol. The catalysed reaction is 5-methylaminomethyl-2-(Se-phospho)selenouridine(34) in tRNA + H2O = 5-methylaminomethyl-2-selenouridine(34) in tRNA + phosphate. In terms of biological role, involved in the post-transcriptional modification of the uridine at the wobble position (U34) of tRNA(Lys), tRNA(Glu) and tRNA(Gln). Catalyzes the conversion of 2-thiouridine (S2U-RNA) to 2-selenouridine (Se2U-RNA). Acts in a two-step process involving geranylation of 2-thiouridine (S2U) to S-geranyl-2-thiouridine (geS2U) and subsequent selenation of the latter derivative to 2-selenouridine (Se2U) in the tRNA chain. This chain is tRNA 2-selenouridine synthase, found in Escherichia coli O127:H6 (strain E2348/69 / EPEC).